A 388-amino-acid chain; its full sequence is Ectopic P granules protein 6 (388 aa).

Over residues 1-25 (MSKKEETIFFRIEKENRPESSKKEE) the composition is skewed to basic and acidic residues. The segment at 1–33 (MSKKEETIFFRIEKENRPESSKKEEDENSTEEM) is disordered. The stretch at 217 to 257 (AHLTDIAQVALNCQGTLVATGSTKGTVIRVFDARTKGPLYE) is one WD 1 repeat. The LRRG motif signature appears at 258–261 (LRRG). The WD 2 repeat unit spans residues 262 to 301 (TVQAHLQCMAFSPCSSYLAVASDKGTLHMFGIRDAEPQKK). The required for atg-2 binding stretch occupies residues 265 to 328 (AHLQCMAFSP…LDRPVMAIGF (64 aa)).

This sequence belongs to the WD repeat PROPPIN family. In terms of assembly, interacts with atg-2; the interaction is direct. As to expression, widely expressed in tissues including pharyngeal, muscle and neuronal tissues.

It localises to the cytoplasm. The protein localises to the preautophagosomal structure membrane. Functionally, component of the epg-6/atg-2 complex, which is involved in the generation of autophagosomes from omegasomes and in the distribution of atg-9 and atg-13 during the autophagy-mediated degradation of protein aggregates. Binds to phosphatidylinositols on preautophagosomes, which are early autophagic structures, to promote autophagosome formation. In particular, binds with high affinity to phosphatidylinositols including phosphatidylinositol 3-phosphate (PtdIns(3)P) and phosphatidylinositol 5-phosphate (PtdIns(5)P), but more weakly to phosphatidylinositol 4-phosphate (PtdIns(4)P) and phosphatidylinositol 3,5-bisphosphate (PtdIns(3,5)P2). Involved in autophagy-mediated degradation of ribosomal RNA and ribosomal proteins in lysosomes, which is essential for maintaining nucleotide homeostasis. The chain is Ectopic P granules protein 6 from Caenorhabditis elegans.